Here is a 139-residue protein sequence, read N- to C-terminus: Cytochrome c-type biogenesis protein CcmE (139 aa).

Topologically, residues 1–7 are cytoplasmic; sequence MTKRQNR. A helical; Signal-anchor for type II membrane protein membrane pass occupies residues 8–28; sequence MTLVALLVIGVSLTGYLGLKA. At 29–139 the chain is on the periplasmic side; sequence FNENLLYFFS…ADALEKAKNK (111 aa). 2 residues coordinate heme: histidine 120 and tyrosine 124.

This sequence belongs to the CcmE/CycJ family.

It is found in the cell inner membrane. In terms of biological role, heme chaperone required for the biogenesis of c-type cytochromes. Transiently binds heme delivered by CcmC and transfers the heme to apo-cytochromes in a process facilitated by CcmF and CcmH. The protein is Cytochrome c-type biogenesis protein CcmE of Ruthia magnifica subsp. Calyptogena magnifica.